Here is a 467-residue protein sequence, read N- to C-terminus: Uronate isomerase (467 aa).

This sequence belongs to the metallo-dependent hydrolases superfamily. Uronate isomerase family.

The catalysed reaction is D-glucuronate = D-fructuronate. It carries out the reaction aldehydo-D-galacturonate = keto-D-tagaturonate. It functions in the pathway carbohydrate metabolism; pentose and glucuronate interconversion. The sequence is that of Uronate isomerase from Geobacillus thermodenitrificans (strain NG80-2).